The sequence spans 38 residues: Large ribosomal subunit protein bL36 (38 aa).

This sequence belongs to the bacterial ribosomal protein bL36 family.

The protein is Large ribosomal subunit protein bL36 of Methylacidiphilum infernorum (isolate V4) (Methylokorus infernorum (strain V4)).